The following is a 366-amino-acid chain: NADH-quinone oxidoreductase subunit D (366 aa).

Belongs to the complex I 49 kDa subunit family. NDH-1 is composed of 14 different subunits. Subunits NuoB, C, D, E, F, and G constitute the peripheral sector of the complex.

The protein localises to the cell membrane. The enzyme catalyses a quinone + NADH + 5 H(+)(in) = a quinol + NAD(+) + 4 H(+)(out). NDH-1 shuttles electrons from NADH, via FMN and iron-sulfur (Fe-S) centers, to quinones in the respiratory chain. The immediate electron acceptor for the enzyme in this species is believed to be a menaquinone. Couples the redox reaction to proton translocation (for every two electrons transferred, four hydrogen ions are translocated across the cytoplasmic membrane), and thus conserves the redox energy in a proton gradient. The protein is NADH-quinone oxidoreductase subunit D of Geobacillus thermodenitrificans (strain NG80-2).